The following is a 318-amino-acid chain: Putative HTH-type transcriptional regulatory protein MJ1164 (318 aa).

The 59-residue stretch at 131 to 189 (LKEVREAMGISVGKLAEVAGVSRKAIYKYETQMANPSVDVALKIEEFLDVPLVKGIDLF) folds into the HTH cro/C1-type domain. The segment at residues 142–161 (VGKLAEVAGVSRKAIYKYET) is a DNA-binding region (H-T-H motif).

This Methanocaldococcus jannaschii (strain ATCC 43067 / DSM 2661 / JAL-1 / JCM 10045 / NBRC 100440) (Methanococcus jannaschii) protein is Putative HTH-type transcriptional regulatory protein MJ1164.